The sequence spans 248 residues: Triosephosphate isomerase (248 aa).

9–11 (NWK) contributes to the substrate binding site. The active-site Electrophile is the H101. Residue E170 is the Proton acceptor of the active site. Substrate-binding positions include G176, S208, and 229-230 (GG).

This sequence belongs to the triosephosphate isomerase family. As to quaternary structure, homodimer.

It is found in the cytoplasm. It catalyses the reaction D-glyceraldehyde 3-phosphate = dihydroxyacetone phosphate. It functions in the pathway carbohydrate biosynthesis; gluconeogenesis. Its pathway is carbohydrate degradation; glycolysis; D-glyceraldehyde 3-phosphate from glycerone phosphate: step 1/1. Involved in the gluconeogenesis. Catalyzes stereospecifically the conversion of dihydroxyacetone phosphate (DHAP) to D-glyceraldehyde-3-phosphate (G3P). The polypeptide is Triosephosphate isomerase (Mycoplasmopsis pulmonis (strain UAB CTIP) (Mycoplasma pulmonis)).